We begin with the raw amino-acid sequence, 428 residues long: C4-dicarboxylate transport protein (428 aa).

8 helical membrane-spanning segments follow: residues 8-28, 44-64, 76-96, 142-162, 184-204, 222-242, 326-346, and 352-372; these read SLYF…HFYP, LIKM…IAGM, VALL…LIIV, IGAF…LFGF, VIFG…FGAM, LIIC…GSIA, IVHQ…AAGV, and IVLA…LALI.

The protein belongs to the dicarboxylate/amino acid:cation symporter (DAACS) (TC 2.A.23) family.

Its subcellular location is the cell inner membrane. Functionally, responsible for the transport of dicarboxylates such as succinate, fumarate, and malate from the periplasm across the membrane. The sequence is that of C4-dicarboxylate transport protein from Escherichia coli O139:H28 (strain E24377A / ETEC).